A 217-amino-acid chain; its full sequence is Nucleoredoxin-like protein 1 (217 aa).

The Thioredoxin domain maps to 1 to 164 (MASLFSGRIL…AAELLDRSFL (164 aa)). The span at 188-204 (VDRDVGRERGRNGRDSG) shows a compositional bias: basic and acidic residues. A disordered region spans residues 188 to 217 (VDRDVGRERGRNGRDSGDPQGDAGTRAELW).

Belongs to the nucleoredoxin family. In terms of assembly, interacts with isoform 1 of BSG. Expressed in the retina (at protein level). Expressed predominantly by photoreceptors in both the inner and outer nuclear layer (at protein level). Not expressed in the testis, spleen, intestine, lung, cerebellum, or kidney.

It localises to the cell projection. Its subcellular location is the cilium. The protein resides in the photoreceptor outer segment. Plays an important role in retinal cone photoreceptor survival. In association with glucose transporter SLC16A1/GLUT1 and BSG, promotes retinal cone survival by enhancing aerobic glycolysis and accelerating the entry of glucose into photoreceptors. May play a role in cone cell viability, slowing down cone degeneration, does not seem to play a role in degenerating rods. The protein is Nucleoredoxin-like protein 1 (Nxnl1) of Mus musculus (Mouse).